Here is a 318-residue protein sequence, read N- to C-terminus: Dimethyladenosine transferase (318 aa).

Positions 37, 39, 64, 85, 113, and 128 each coordinate S-adenosyl-L-methionine.

It belongs to the class I-like SAM-binding methyltransferase superfamily. rRNA adenine N(6)-methyltransferase family.

It localises to the cytoplasm. It is found in the nucleus. The protein resides in the nucleolus. The enzyme catalyses adenosine(1779)/adenosine(1780) in 18S rRNA + 4 S-adenosyl-L-methionine = N(6)-dimethyladenosine(1779)/N(6)-dimethyladenosine(1780) in 18S rRNA + 4 S-adenosyl-L-homocysteine + 4 H(+). Specifically dimethylates two adjacent adenosines in the loop of a conserved hairpin near the 3'-end of 18S rRNA in the 40S particle. This chain is Dimethyladenosine transferase, found in Saccharomyces cerevisiae (strain ATCC 204508 / S288c) (Baker's yeast).